A 436-amino-acid polypeptide reads, in one-letter code: GTPase Der (436 aa).

2 EngA-type G domains span residues 4-167 (PTVA…PTEA) and 175-351 (IKFS…QSQN). GTP-binding positions include 10-17 (GRPNVGKS), 57-61 (DTGGI), 119-122 (NKVD), 181-188 (GRPNVGKS), 229-233 (DTAGM), and 294-297 (NKWD). In terms of domain architecture, KH-like spans 352–436 (TRIPSAVLND…PIRLIARKRK (85 aa)).

The protein belongs to the TRAFAC class TrmE-Era-EngA-EngB-Septin-like GTPase superfamily. EngA (Der) GTPase family. In terms of assembly, associates with the 50S ribosomal subunit.

Its function is as follows. GTPase that plays an essential role in the late steps of ribosome biogenesis. The polypeptide is GTPase Der (Streptococcus mutans serotype c (strain ATCC 700610 / UA159)).